Consider the following 79-residue polypeptide: Conotoxin 1 (79 aa).

Residues 1-22 (MKLTCVLIITVLFLTASQLITA) form the signal peptide. Residues 23–46 (DYSRDQRQYRAVRLGDEMRTFKGA) constitute a propeptide that is removed on maturation. 3 cysteine pairs are disulfide-bonded: Cys49–Cys62, Cys56–Cys67, and Cys61–Cys77.

The protein belongs to the conotoxin O1 superfamily. In terms of tissue distribution, expressed by the venom duct.

Its subcellular location is the secreted. The chain is Conotoxin 1 from Conus vexillum (Flag cone).